We begin with the raw amino-acid sequence, 34 residues long: Mu-theraphotoxin-Pspp1 (34 aa).

3 cysteine pairs are disulfide-bonded: C2/C17, C9/C22, and C16/C29. F34 carries the post-translational modification Phenylalanine amide.

It belongs to the neurotoxin 10 (Hwtx-1) family. In terms of tissue distribution, expressed by the venom gland.

The protein resides in the secreted. Its function is as follows. Voltage-gated sodium channel inhibitor. It is unclear if it selectively inhibits Nav1.7/SCN9A or shows similar potency on all sodium channels tested. According to Escoubas et al., 2006 and Nicolas et al., 2019, it is selective over Nav1.7/SCN9A (90% inhibition at 1 uM), versus Nav1.4 and Nav1.6 (35% inhibition), and shows a small inhibition on all other sodium channels (except Nav1.8/SCN10A). According to Goncalves et al., 2019, it shows a similar inhibition on almost all sodium channels tested (Nav1.1/SCN1A (IC(50)=280.3 nM), Nav1.2/SCN2A (IC(50)=73.7 nM), Nav1.3/SCN3A (IC(50)=201.5 nM), Nav1.4/SCN4A (IC(50)&gt;2100 nM), Nav1.5/SCN5A (IC(50)=710.6 nM), Nav1.6/SCN8A (IC(50)=491.2 nM), and Nav1.7/SCN9A (IC(50)=254.3-260 nM)), except Nav1.8/SCN10A. The voltage-dependence of steady-state Nav1.7/SCN9A channel activation and inactivation are not affected, suggesting that is does not act as a gating-modifier toxin but rather blocks or impedes ion flux through the channel pore. The toxin effect is partial and poorly reversible. In addition to its inhibition to sodium channels, it also shows a small inhibition on rat Kv3.4/KCNC4 potassium channels (20% inhibition at 1 uM). In vivo, when tested on pain models, it shows analgesic activity. In Phlogiellus sp. (Tarantula), this protein is Mu-theraphotoxin-Pspp1.